The primary structure comprises 706 residues: Ribosomal RNA large subunit methyltransferase K/L (706 aa).

Residues 43-154 (LMYQSLLWSR…RDMASVALDL (112 aa)) form the THUMP domain.

This sequence belongs to the methyltransferase superfamily. RlmKL family.

Its subcellular location is the cytoplasm. The enzyme catalyses guanosine(2445) in 23S rRNA + S-adenosyl-L-methionine = N(2)-methylguanosine(2445) in 23S rRNA + S-adenosyl-L-homocysteine + H(+). The catalysed reaction is guanosine(2069) in 23S rRNA + S-adenosyl-L-methionine = N(2)-methylguanosine(2069) in 23S rRNA + S-adenosyl-L-homocysteine + H(+). Functionally, specifically methylates the guanine in position 2445 (m2G2445) and the guanine in position 2069 (m7G2069) of 23S rRNA. This Yersinia enterocolitica serotype O:8 / biotype 1B (strain NCTC 13174 / 8081) protein is Ribosomal RNA large subunit methyltransferase K/L.